We begin with the raw amino-acid sequence, 501 residues long: Cytochrome P450 71D6 (501 aa).

C442 contributes to the heme binding site.

The protein belongs to the cytochrome P450 family. Heme is required as a cofactor.

This chain is Cytochrome P450 71D6 (CYP71D6), found in Solanum chacoense (Chaco potato).